The following is a 460-amino-acid chain: NADH-quinone oxidoreductase subunit N (460 aa).

A run of 13 helical transmembrane segments spans residues 2 to 22 (LLPEITLTLTALLSQFFAVML), 28 to 48 (IVANITILLTILTIFIILKYS), 65 to 85 (ANIANYKAIILIFTIISMIIY), 104 to 124 (ILLSTVGIFVAISAQNFLLLF), 155 to 175 (FILGSLVSCLSLFGISFIYGF), 196 to 216 (LGLVIGVVLFLSSIFFKLSSA), 230 to 250 (PIASVTYFTAASKIGAVAILL), 263 to 283 (ISYNLIKIIALLSMIFGALGA), 292 to 312 (LMAYSTILNIGYVLIGVLLRT), 321 to 341 (LYMLIYAAASIGFFTCLIMLL), 363 to 383 (IAAAICIIMFSMIGIPPLAGF), 400 to 420 (LLAYFGIFTSVIAAFYYLKII), and 438 to 458 (YGLLLINFVVIGFLLFGSFII).

It belongs to the complex I subunit 2 family. NDH-1 is composed of 14 different subunits. Subunits NuoA, H, J, K, L, M, N constitute the membrane sector of the complex.

The protein localises to the cell inner membrane. The catalysed reaction is a quinone + NADH + 5 H(+)(in) = a quinol + NAD(+) + 4 H(+)(out). Its function is as follows. NDH-1 shuttles electrons from NADH, via FMN and iron-sulfur (Fe-S) centers, to quinones in the respiratory chain. The immediate electron acceptor for the enzyme in this species is believed to be ubiquinone. Couples the redox reaction to proton translocation (for every two electrons transferred, four hydrogen ions are translocated across the cytoplasmic membrane), and thus conserves the redox energy in a proton gradient. The polypeptide is NADH-quinone oxidoreductase subunit N (Rickettsia bellii (strain RML369-C)).